Consider the following 216-residue polypeptide: 2,5-diamino-6-ribosylamino-4(3H)-pyrimidinone 5'-phosphate reductase (216 aa).

Residues T51, D55, 79–82 (SMAR), V126, and 148–151 (GSTL) contribute to the NADP(+) site.

It belongs to the HTP reductase family. Homodimer.

The catalysed reaction is 2,5-diamino-6-(1-D-ribitylamino)pyrimidin-4(3H)-one 5'-phosphate + NADP(+) = 2,5-diamino-6-(1-D-ribosylamino)pyrimidin-4(3H)-one 5'-phosphate + NADPH + H(+). The enzyme catalyses 2,5-diamino-6-(1-D-ribitylamino)pyrimidin-4(3H)-one 5'-phosphate + NAD(+) = 2,5-diamino-6-(1-D-ribosylamino)pyrimidin-4(3H)-one 5'-phosphate + NADH + H(+). It functions in the pathway cofactor biosynthesis; riboflavin biosynthesis. Functionally, catalyzes an early step in riboflavin biosynthesis, the NADPH-dependent reduction of the ribose side chain of 2,5-diamino-6-ribosylamino-4(3H)-pyrimidinone 5'-phosphate, yielding 2,5-diamino-6-ribitylamino-4(3H)-pyrimidinone 5'-phosphate. In Methanothermobacter thermautotrophicus (strain ATCC 29096 / DSM 1053 / JCM 10044 / NBRC 100330 / Delta H) (Methanobacterium thermoautotrophicum), this protein is 2,5-diamino-6-ribosylamino-4(3H)-pyrimidinone 5'-phosphate reductase.